The following is a 1938-amino-acid chain: Myosin heavy chain, striated muscle (1938 aa).

Residues 29-79 (DGKKNCWVPDEKEGFASAEIQSSKGDEITVKIVADSSTRTVKKDDIQSMNP) enclose the Myosin N-terminal SH3-like domain. Residues 83–775 (EKLEDMANMT…VLGNLEEMRD (693 aa)) enclose the Myosin motor domain. Residue 176 to 183 (GESGAGKT) coordinates ATP. The tract at residues 653–675 (LNKLMKNLYSTHPHFVRCIIPNE) is actin-binding. The region spanning 778–805 (LSKIISMFQAHIRGYLIRKAYKKLQDQR) is the IQ domain. The interval 836-1938 (LLSIARQEEE…RSSVSVSASN (1103 aa)) is rodlike tail (S2 and LMM domains). Residues 836–1938 (LLSIARQEEE…RSSVSVSASN (1103 aa)) are a coiled coil. 2 stretches are compositionally biased toward basic and acidic residues: residues 1041 to 1058 (VRGD…DLKS) and 1212 to 1225 (SKLE…KREM). 4 disordered regions span residues 1041-1062 (VRGD…TQEN), 1187-1332 (SALR…EVRN), 1344-1363 (LEEE…KANN), and 1898-1938 (HELE…SASN). Residues 1265–1285 (RSINELQSQKSRLQAENSDLT) are compositionally biased toward polar residues. Basic and acidic residues-rich tracts occupy residues 1286–1303 (RQLE…KEKS), 1310–1332 (EDAR…EVRN), and 1344–1354 (LEEEQESKSDV). The segment covering 1922–1938 (RSSVSVQRSSVSVSASN) has biased composition (low complexity).

This sequence belongs to the TRAFAC class myosin-kinesin ATPase superfamily. Myosin family. As to quaternary structure, muscle myosin is a hexameric protein that consists of 2 heavy chain subunits (MHC), 2 alkali light chain subunits (MLC) and 2 regulatory light chain subunits (MLC-2).

The protein localises to the cytoplasm. It is found in the myofibril. Muscle contraction. In terms of biological role, myosin is a protein that binds to F-actin and has ATPase activity that is activated by F-actin. This is Myosin heavy chain, striated muscle from Argopecten irradians (Bay scallop).